Here is a 254-residue protein sequence, read N- to C-terminus: Hydroxyacylglutathione hydrolase (254 aa).

His-54, His-56, Asp-58, His-59, His-111, Asp-130, and His-168 together coordinate Zn(2+).

It belongs to the metallo-beta-lactamase superfamily. Glyoxalase II family. In terms of assembly, monomer. The cofactor is Zn(2+).

It catalyses the reaction an S-(2-hydroxyacyl)glutathione + H2O = a 2-hydroxy carboxylate + glutathione + H(+). It participates in secondary metabolite metabolism; methylglyoxal degradation; (R)-lactate from methylglyoxal: step 2/2. Its function is as follows. Thiolesterase that catalyzes the hydrolysis of S-D-lactoyl-glutathione to form glutathione and D-lactic acid. The sequence is that of Hydroxyacylglutathione hydrolase from Legionella pneumophila (strain Corby).